A 419-amino-acid polypeptide reads, in one-letter code: Tyrosine--tRNA ligase (419 aa).

An L-tyrosine-binding site is contributed by Tyr34. The short motif at Pro39–Asn48 is the 'HIGH' region element. 2 residues coordinate L-tyrosine: Tyr169 and Gln173. Positions Lys230 to Thr234 match the 'KMSKS' region motif. Position 233 (Lys233) interacts with ATP. Positions Val352 to Ala419 constitute an S4 RNA-binding domain.

This sequence belongs to the class-I aminoacyl-tRNA synthetase family. TyrS type 1 subfamily. In terms of assembly, homodimer.

Its subcellular location is the cytoplasm. It carries out the reaction tRNA(Tyr) + L-tyrosine + ATP = L-tyrosyl-tRNA(Tyr) + AMP + diphosphate + H(+). Its function is as follows. Catalyzes the attachment of tyrosine to tRNA(Tyr) in a two-step reaction: tyrosine is first activated by ATP to form Tyr-AMP and then transferred to the acceptor end of tRNA(Tyr). In Geobacillus kaustophilus (strain HTA426), this protein is Tyrosine--tRNA ligase.